Consider the following 428-residue polypeptide: MSAVVKSIKAREILDSRGNPTVEADVVLSDGSFGRAAVPSGASTGSHEAVELRDGDKSRYNGLGVQKAVTNVNTAIAKAISGFKASDQQGLDNLLIELDGTPNKAKLGANAMLATSLAVAHAAAASCHMPLYRYLNNCDEYILPVPMFNILNGGKHASNSTDFQEFMVMPTGAKSFAEALRMGTEVYHSLKKVLKGMNQNTTVGDEGGFAPSLPTNKDAVEVILKAIEKAGYRPGEDIFIALDPASSELYQDGKYTLATENKTLSSAEMVDYWCGWVEKYPIISIEDGLFEDDWDGWKMLTKKIGSKVQLVGDDFYVTNIKRLERGIKENASNSILIKLNQIGTLSETIAAIKMANNSAWTAVVSHRSGETEDTTIADLAVAMNAGQIKTGAPCRAERTAKYNRLLRIEEELGGKAKYPGKEAFFNLK.

Glutamine 164 provides a ligand contact to (2R)-2-phosphoglycerate. Residue glutamate 206 is the Proton donor of the active site. Mg(2+) contacts are provided by aspartate 243, glutamate 286, and aspartate 313. Residues lysine 338, arginine 367, serine 368, and lysine 389 each coordinate (2R)-2-phosphoglycerate. Catalysis depends on lysine 338, which acts as the Proton acceptor.

The protein belongs to the enolase family. It depends on Mg(2+) as a cofactor.

The protein resides in the cytoplasm. It is found in the secreted. The protein localises to the cell surface. The enzyme catalyses (2R)-2-phosphoglycerate = phosphoenolpyruvate + H2O. Its pathway is carbohydrate degradation; glycolysis; pyruvate from D-glyceraldehyde 3-phosphate: step 4/5. Catalyzes the reversible conversion of 2-phosphoglycerate (2-PG) into phosphoenolpyruvate (PEP). It is essential for the degradation of carbohydrates via glycolysis. The sequence is that of Enolase from Dehalococcoides mccartyi (strain ATCC BAA-2266 / KCTC 15142 / 195) (Dehalococcoides ethenogenes (strain 195)).